A 325-amino-acid polypeptide reads, in one-letter code: Melanocortin receptor 5 (325 aa).

At 1-37 (MNSSSHLTLLDLTLNASEDNILGQNVNNKSSACEDMG) the chain is on the extracellular side. N-linked (GlcNAc...) asparagine glycans are attached at residues asparagine 2, asparagine 15, and asparagine 28. A helical membrane pass occupies residues 38-61 (IAVEVFLTLGLVSLLENILVIGAI). At 62-73 (VKNKNLHSPMYF) the chain is on the cytoplasmic side. Residues 74–97 (FVGSLAVADMLVSMSNAWETITIY) traverse the membrane as a helical segment. Residues 98 to 114 (LINNKHVVIADTFVRHI) are Extracellular-facing. Residues 115-138 (DNVFDSMICISVVASMCSLLAIAV) form a helical membrane-spanning segment. Over 139–155 (DRYITIFYALRYHHIMT) the chain is Cytoplasmic. Residues 156–179 (ARRSGVIIACIWTFCISCGIVFII) traverse the membrane as a helical segment. Residues 180 to 186 (YYESKYV) are Extracellular-facing. Residues 187–211 (IVCLISMFFTMLFFMVSLYIHMFLL) traverse the membrane as a helical segment. Residues 212–239 (ARNHVKRIAASPRYNSVRQRASMKGAIT) lie on the Cytoplasmic side of the membrane. The helical transmembrane segment at 240–265 (LTMLLGIFIVCWSPFFLHLILMISCP) threads the bilayer. Over 266-273 (QNVYCACF) the chain is Extracellular. Residues 274-297 (MSYFNMYLILIMCNSVIDPLIYAL) traverse the membrane as a helical segment. Over 298–325 (RSQEMRRTFKEIICCHGFRRTCTLLGRY) the chain is Cytoplasmic. S-palmitoyl cysteine attachment occurs at residues cysteine 311 and cysteine 312.

Belongs to the G-protein coupled receptor 1 family. As to expression, very low expression levels is detected in brain, while high levels are found in adrenals, stomach, lung and spleen.

It localises to the cell membrane. Functionally, receptor for MSH (alpha, beta and gamma) and ACTH. The activity of this receptor is mediated by G proteins which activate adenylate cyclase. This receptor is a possible mediator of the immunomodulation properties of melanocortins. The chain is Melanocortin receptor 5 (Mc5r) from Rattus norvegicus (Rat).